The chain runs to 431 residues: Probable zinc metalloprotease Lema_P086240 (431 aa).

Asparagine 46 is a glycosylation site (N-linked (GlcNAc...) asparagine). Histidine 117, aspartate 137, and glutamate 170 together coordinate Zn(2+). Asparagine 185 carries an N-linked (GlcNAc...) asparagine glycan. Aspartate 197 serves as a coordination point for Zn(2+). N-linked (GlcNAc...) asparagine glycans are attached at residues asparagine 258, asparagine 310, asparagine 349, asparagine 359, and asparagine 369. Residues 344–431 (PGMPRNVTID…KSPAVYPFPG (88 aa)) form the Fibronectin type-III domain.

The protein belongs to the peptidase M28 family. M28B subfamily. Requires Zn(2+) as cofactor.

The protein localises to the secreted. The protein is Probable zinc metalloprotease Lema_P086240 of Leptosphaeria maculans (strain JN3 / isolate v23.1.3 / race Av1-4-5-6-7-8) (Blackleg fungus).